Consider the following 158-residue polypeptide: Small ribosomal subunit protein uS9 (158 aa).

It belongs to the universal ribosomal protein uS9 family.

The polypeptide is Small ribosomal subunit protein uS9 (Brucella melitensis biotype 2 (strain ATCC 23457)).